The chain runs to 778 residues: Ribonucleoside-diphosphate reductase large subunit (778 aa).

Residues Ser-177, 192–193, Gly-221, 419–423, and 613–617 each bind substrate; these read SC, NLCIE, and PTATS. Cys-193 and Cys-439 are joined by a disulfide. Residue Asn-419 is the Proton acceptor of the active site. Cys-421 functions as the Cysteine radical intermediate in the catalytic mechanism. The active-site Proton acceptor is the Glu-423.

The protein belongs to the ribonucleoside diphosphate reductase large chain family. As to quaternary structure, heterotetramer composed of a homodimer of the large subunit (R1) and a homodimer of the small subunit (R2). Larger multisubunit protein complex are also active, composed of (R1)n(R2)n.

The enzyme catalyses a 2'-deoxyribonucleoside 5'-diphosphate + [thioredoxin]-disulfide + H2O = a ribonucleoside 5'-diphosphate + [thioredoxin]-dithiol. Under complex allosteric control mediated by deoxynucleoside triphosphates and ATP binding. The type of nucleotide bound at the specificity site determines substrate preference. It seems probable that ATP makes the enzyme reduce CDP and UDP, dGTP favors ADP reduction and dTTP favors GDP reduction. Functionally, ribonucleoside-diphosphate reductase holoenzyme provides the precursors necessary for viral DNA synthesis. Allows virus growth in non-dividing cells. Catalyzes the biosynthesis of deoxyribonucleotides from the corresponding ribonucleotides. This chain is Ribonucleoside-diphosphate reductase large subunit, found in African swine fever virus (isolate Tick/South Africa/Pretoriuskop Pr4/1996) (ASFV).